A 500-amino-acid chain; its full sequence is Aromatic-L-amino-acid decarboxylase (500 aa).

Residue Pro-102 coordinates L-tryptophan. Position 168 (Ser-168) interacts with pyridoxal 5'-phosphate. His-203 provides a ligand contact to L-tryptophan. Residue Thr-262 participates in pyridoxal 5'-phosphate binding. Position 318 (His-318) interacts with L-tryptophan. Lys-319 is subject to N6-(pyridoxal phosphate)lysine. Tyr-348 provides a ligand contact to L-tryptophan.

It belongs to the group II decarboxylase family. Homodimer. Requires pyridoxal 5'-phosphate as cofactor.

It carries out the reaction L-tryptophan + H(+) = tryptamine + CO2. The catalysed reaction is 5-hydroxy-L-tryptophan + H(+) = serotonin + CO2. Its function is as follows. Catalyzes the decarboxylation of L-tryptophan to tryptamine and L-5-hydroxytryptophan to serotonin, respectively. The polypeptide is Aromatic-L-amino-acid decarboxylase (Catharanthus roseus (Madagascar periwinkle)).